The sequence spans 337 residues: Glyceraldehyde-3-phosphate dehydrogenase 1, cytosolic (337 aa).

NAD(+)-binding positions include 13 to 14, Asp35, and Arg82; that span reads RI. Residues 153–155, Thr184, 213–214, and Arg236 contribute to the D-glyceraldehyde 3-phosphate site; these read SCT and TG. Cys154 serves as the catalytic Nucleophile. Residue Asn318 participates in NAD(+) binding.

This sequence belongs to the glyceraldehyde-3-phosphate dehydrogenase family. In terms of assembly, homotetramer.

The protein localises to the cytoplasm. The enzyme catalyses D-glyceraldehyde 3-phosphate + phosphate + NAD(+) = (2R)-3-phospho-glyceroyl phosphate + NADH + H(+). It participates in carbohydrate degradation; glycolysis; pyruvate from D-glyceraldehyde 3-phosphate: step 1/5. Functionally, key enzyme in glycolysis that catalyzes the first step of the pathway by converting D-glyceraldehyde 3-phosphate (G3P) into 3-phospho-D-glyceroyl phosphate. Essential for the maintenance of cellular ATP levels and carbohydrate metabolism. In Hordeum vulgare (Barley), this protein is Glyceraldehyde-3-phosphate dehydrogenase 1, cytosolic (GAPC).